A 177-amino-acid chain; its full sequence is Peptide methionine sulfoxide reductase MsrA (177 aa).

Cysteine 15 is a catalytic residue.

Belongs to the MsrA Met sulfoxide reductase family.

The catalysed reaction is L-methionyl-[protein] + [thioredoxin]-disulfide + H2O = L-methionyl-(S)-S-oxide-[protein] + [thioredoxin]-dithiol. The enzyme catalyses [thioredoxin]-disulfide + L-methionine + H2O = L-methionine (S)-S-oxide + [thioredoxin]-dithiol. Functionally, has an important function as a repair enzyme for proteins that have been inactivated by oxidation. Catalyzes the reversible oxidation-reduction of methionine sulfoxide in proteins to methionine. This Listeria welshimeri serovar 6b (strain ATCC 35897 / DSM 20650 / CCUG 15529 / CIP 8149 / NCTC 11857 / SLCC 5334 / V8) protein is Peptide methionine sulfoxide reductase MsrA.